The chain runs to 355 residues: Uroporphyrinogen decarboxylase (355 aa).

Substrate is bound by residues 38–42 (RQAGR), Asp-87, Tyr-162, Ser-217, and His-331.

This sequence belongs to the uroporphyrinogen decarboxylase family. Homodimer.

The protein localises to the cytoplasm. The catalysed reaction is uroporphyrinogen III + 4 H(+) = coproporphyrinogen III + 4 CO2. It participates in porphyrin-containing compound metabolism; protoporphyrin-IX biosynthesis; coproporphyrinogen-III from 5-aminolevulinate: step 4/4. Catalyzes the decarboxylation of four acetate groups of uroporphyrinogen-III to yield coproporphyrinogen-III. In Streptomyces coelicolor (strain ATCC BAA-471 / A3(2) / M145), this protein is Uroporphyrinogen decarboxylase.